The following is a 334-amino-acid chain: GTP 3',8-cyclase (334 aa).

The Radical SAM core domain maps to 13 to 239 (RFHRKFYYLR…KVKAANDGPA (227 aa)). R22 contributes to the GTP binding site. Positions 29 and 33 each coordinate [4Fe-4S] cluster. Y35 is a binding site for S-adenosyl-L-methionine. [4Fe-4S] cluster is bound at residue C36. R73 lines the GTP pocket. S-adenosyl-L-methionine is bound at residue G77. T104 provides a ligand contact to GTP. S128 is a binding site for S-adenosyl-L-methionine. K165 contacts GTP. M199 contributes to the S-adenosyl-L-methionine binding site. Residues C262 and C265 each coordinate [4Fe-4S] cluster. Residue 267–269 (RLR) coordinates GTP. Residue C279 participates in [4Fe-4S] cluster binding.

Belongs to the radical SAM superfamily. MoaA family. In terms of assembly, monomer and homodimer. [4Fe-4S] cluster serves as cofactor.

It catalyses the reaction GTP + AH2 + S-adenosyl-L-methionine = (8S)-3',8-cyclo-7,8-dihydroguanosine 5'-triphosphate + 5'-deoxyadenosine + L-methionine + A + H(+). The protein operates within cofactor biosynthesis; molybdopterin biosynthesis. Its function is as follows. Catalyzes the cyclization of GTP to (8S)-3',8-cyclo-7,8-dihydroguanosine 5'-triphosphate. This is GTP 3',8-cyclase from Vibrio vulnificus (strain CMCP6).